The chain runs to 672 residues: DNA ligase (672 aa).

NAD(+) contacts are provided by residues 32–36 (DAEYD), 81–82 (SL), and glutamate 113. Lysine 115 serves as the catalytic N6-AMP-lysine intermediate. Residues arginine 136, glutamate 173, lysine 290, and lysine 314 each coordinate NAD(+). 4 residues coordinate Zn(2+): cysteine 408, cysteine 411, cysteine 426, and cysteine 432. Residues 594–672 (EIDSPFAGKT…EAEMLRLLGE (79 aa)) enclose the BRCT domain.

Belongs to the NAD-dependent DNA ligase family. LigA subfamily. Requires Mg(2+) as cofactor. Mn(2+) is required as a cofactor.

The catalysed reaction is NAD(+) + (deoxyribonucleotide)n-3'-hydroxyl + 5'-phospho-(deoxyribonucleotide)m = (deoxyribonucleotide)n+m + AMP + beta-nicotinamide D-nucleotide.. DNA ligase that catalyzes the formation of phosphodiester linkages between 5'-phosphoryl and 3'-hydroxyl groups in double-stranded DNA using NAD as a coenzyme and as the energy source for the reaction. It is essential for DNA replication and repair of damaged DNA. The polypeptide is DNA ligase (Cronobacter sakazakii (strain ATCC BAA-894) (Enterobacter sakazakii)).